The following is a 295-amino-acid chain: Protoheme IX farnesyltransferase (295 aa).

9 helical membrane passes run 30–50 (LVVLTGVTGIIIAPGNIHPLI), 51–71 (AVISTLCIALGSGAAGAINMW), 93–115 (ISRSSALEVGLVLSFISVTIMMI), 119–136 (YISGILLAISIGFYIYVY), 148–168 (IVIGGAAGALPPIIGWTSVTG), 175–195 (LVLFLIIFMWTPPHFWALSLL), 219–239 (IHILVYSILLFPITLLPGLFL), 244–264 (LYEITAIPLGLMFVVQAFQVF), and 275–295 (MFTYSIIYLFILFTCIMLSSF).

The protein belongs to the UbiA prenyltransferase family. Protoheme IX farnesyltransferase subfamily.

The protein localises to the cell inner membrane. It catalyses the reaction heme b + (2E,6E)-farnesyl diphosphate + H2O = Fe(II)-heme o + diphosphate. The protein operates within porphyrin-containing compound metabolism; heme O biosynthesis; heme O from protoheme: step 1/1. Its function is as follows. Converts heme B (protoheme IX) to heme O by substitution of the vinyl group on carbon 2 of heme B porphyrin ring with a hydroxyethyl farnesyl side group. The sequence is that of Protoheme IX farnesyltransferase from Ehrlichia ruminantium (strain Welgevonden).